The chain runs to 203 residues: ATP-dependent Clp protease proteolytic subunit 1 (203 aa).

The active-site Nucleophile is the S101. Residue H126 is part of the active site.

Belongs to the peptidase S14 family. Fourteen ClpP subunits assemble into 2 heptameric rings which stack back to back to give a disk-like structure with a central cavity, resembling the structure of eukaryotic proteasomes.

It is found in the cytoplasm. The catalysed reaction is Hydrolysis of proteins to small peptides in the presence of ATP and magnesium. alpha-casein is the usual test substrate. In the absence of ATP, only oligopeptides shorter than five residues are hydrolyzed (such as succinyl-Leu-Tyr-|-NHMec, and Leu-Tyr-Leu-|-Tyr-Trp, in which cleavage of the -Tyr-|-Leu- and -Tyr-|-Trp bonds also occurs).. Cleaves peptides in various proteins in a process that requires ATP hydrolysis. Has a chymotrypsin-like activity. Plays a major role in the degradation of misfolded proteins. The chain is ATP-dependent Clp protease proteolytic subunit 1 from Synechococcus sp. (strain JA-3-3Ab) (Cyanobacteria bacterium Yellowstone A-Prime).